A 175-amino-acid polypeptide reads, in one-letter code: Co-chaperone protein HscB homolog (175 aa).

One can recognise a J domain in the interval 2–76 (NYFALFNLTP…RAEHMLELRG (75 aa)).

It belongs to the HscB family. In terms of assembly, interacts with HscA and stimulates its ATPase activity.

In terms of biological role, co-chaperone involved in the maturation of iron-sulfur cluster-containing proteins. Seems to help targeting proteins to be folded toward HscA. This is Co-chaperone protein HscB homolog from Pseudoalteromonas atlantica (strain T6c / ATCC BAA-1087).